A 143-amino-acid polypeptide reads, in one-letter code: Transcriptional regulator MraZ (143 aa).

SpoVT-AbrB domains lie at 5–47 and 76–119; these read EYQH…PLTE and AMEG…AKER.

The protein belongs to the MraZ family. As to quaternary structure, forms oligomers.

The protein localises to the cytoplasm. It localises to the nucleoid. This chain is Transcriptional regulator MraZ, found in Lactobacillus delbrueckii subsp. bulgaricus (strain ATCC 11842 / DSM 20081 / BCRC 10696 / JCM 1002 / NBRC 13953 / NCIMB 11778 / NCTC 12712 / WDCM 00102 / Lb 14).